We begin with the raw amino-acid sequence, 201 residues long: Protease (201 aa).

Active-site residues include H53, D70, and C121.

It belongs to the peptidase C5 family. As to quaternary structure, interacts with protease cofactor pVI-C; this interaction is necessary for protease activation.

The protein localises to the virion. It localises to the host nucleus. The catalysed reaction is Cleaves proteins of the adenovirus and its host cell at two consensus sites: -Yaa-Xaa-Gly-Gly-|-Xaa- and -Yaa-Xaa-Gly-Xaa-|-Gly- (in which Yaa is Met, Ile or Leu, and Xaa is any amino acid).. Requires DNA and protease cofactor for maximal activation. Inside nascent virions, becomes partially activated by binding to the viral DNA, allowing it to cleave the cofactor that binds to the protease and fully activates it. Actin, like the viral protease cofactor, seems to act as a cofactor in the cleavage of cytokeratin 18 and of actin itself. In terms of biological role, cleaves viral precursor proteins (pTP, pIIIa, pVI, pVII, pVIII, and pX) inside newly assembled particles giving rise to mature virions. Protease complexed to its cofactor slides along the viral DNA to specifically locate and cleave the viral precursors. Mature virions have a weakened organization compared to the unmature virions, thereby facilitating subsequent uncoating. Without maturation, the particle lacks infectivity and is unable to uncoat. Late in adenovirus infection, in the cytoplasm, may participate in the cytoskeleton destruction. Cleaves host cell cytoskeletal keratins K7 and K18. This Equine adenovirus B serotype 2 (EAdV-2) protein is Protease.